The following is a 423-amino-acid chain: MVXXKTLEPKFFQSLLDNSPTPYHLVNYIEEKLINYFNAQQLKLNEKWKIKTGSYYIKKEGTSLIAFNIDVKKKYEPFLIAAAHTDSPGLKLKIDATEKVSGVFYNHIEVYGSPIISTWIDRDLSLAGIVYFKKNENIESKLINIENIGIIPNLAIHLNRQINEGFKYNAHDNLTVISSTKKAIKDNILEQLGIECENFLSCDLIFTESQPSKIIGTEGEFLASKNLDNKSGCHAIMNSYVHTSNDKNKIAVFFDNEEVGSLTSRGADSNFLSEVLERIDIALDLTREEHLIKTNKSFNISIDSVHGIHPGYTSKHDPNYQANLGKGVVVKNSANFRYATTSTGFAKLKNLAIKNNIKIQEIIMKANVPSGTTIGPISNARTGIETIDIGTPMWAMHSLRETVSIADHIEAIKLLRAFFEKGI.

Zn(2+) is bound by residues histidine 84, histidine 157, and histidine 397.

The protein belongs to the peptidase M18 family. It depends on Zn(2+) as a cofactor.

The protein is Probable M18 family aminopeptidase 2 (apeB) of Borreliella burgdorferi (strain ATCC 35210 / DSM 4680 / CIP 102532 / B31) (Borrelia burgdorferi).